We begin with the raw amino-acid sequence, 111 residues long: UPF0060 membrane protein NFA_36830 (111 aa).

Transmembrane regions (helical) follow at residues 7-27 (LVLF…VWQG), 33-53 (GLWW…VATF), 62-82 (VLAA…VLVD), and 91-111 (LLGA…PRGG).

It belongs to the UPF0060 family.

It localises to the cell membrane. This Nocardia farcinica (strain IFM 10152) protein is UPF0060 membrane protein NFA_36830.